The chain runs to 115 residues: Cyclin-dependent kinase 2-associated protein 1 (115 aa).

The interval 20–25 (GSVHSP) is interaction with CDK2AP2. Position 46 is a phosphoserine; by IKKE (S46).

This sequence belongs to the CDK2AP family. As to quaternary structure, homodimer. Component of the nucleosome remodeling and deacetylase (NuRD) repressor complex, composed of core proteins MTA1, MTA2, MTA3, RBBP4, RBBP7, HDAC1, HDAC2, MBD2, MBD3, and peripherally associated proteins CDK2AP1, CDK2AP2, GATAD2A, GATAD2B, CHD3, CHD4 and CHD5. The exact stoichiometry of the NuRD complex is unknown, and some subunits such as MBD2 and MBD3, GATAD2A and GATAD2B, and CHD3, CHD4 and CHD5 define mutually exclusive NuRD complexes. Interacts with monomeric unphosphorylated CDK2. Interacts with CDK2AP2. Interacts with GATAD2A. Interacts with HDAC1. Interacts with HDAC2. Interacts with MBD2. Interacts with MBD3. Interacts with RBBP4. Interacts with RBBP7. Post-translationally, phosphorylated in vitro by IKBKE at Ser-46.

The protein resides in the nucleus. Its subcellular location is the chromosome. Functionally, inhibitor of cyclin-dependent kinase CDK2. Also acts as a component of the histone deacetylase NuRD complex which participates in the remodeling of chromatin. In Homo sapiens (Human), this protein is Cyclin-dependent kinase 2-associated protein 1 (CDK2AP1).